Consider the following 164-residue polypeptide: ATP synthase subunit b (164 aa).

A helical membrane pass occupies residues 5-25 (IGELIGNFILVAGSFLLLIVL).

It belongs to the ATPase B chain family. F-type ATPases have 2 components, F(1) - the catalytic core - and F(0) - the membrane proton channel. F(1) has five subunits: alpha(3), beta(3), gamma(1), delta(1), epsilon(1). F(0) has three main subunits: a(1), b(2) and c(10-14). The alpha and beta chains form an alternating ring which encloses part of the gamma chain. F(1) is attached to F(0) by a central stalk formed by the gamma and epsilon chains, while a peripheral stalk is formed by the delta and b chains.

The protein resides in the cell membrane. Its function is as follows. F(1)F(0) ATP synthase produces ATP from ADP in the presence of a proton or sodium gradient. F-type ATPases consist of two structural domains, F(1) containing the extramembraneous catalytic core and F(0) containing the membrane proton channel, linked together by a central stalk and a peripheral stalk. During catalysis, ATP synthesis in the catalytic domain of F(1) is coupled via a rotary mechanism of the central stalk subunits to proton translocation. Component of the F(0) channel, it forms part of the peripheral stalk, linking F(1) to F(0). In Streptococcus gordonii (strain Challis / ATCC 35105 / BCRC 15272 / CH1 / DL1 / V288), this protein is ATP synthase subunit b.